A 427-amino-acid polypeptide reads, in one-letter code: Glucose-1-phosphate adenylyltransferase (427 aa).

The AMP site is built by Arg40, His46, and Arg52. Residue Tyr114 participates in alpha-D-glucose 1-phosphate binding. Arg130 lines the AMP pocket. Alpha-D-glucose 1-phosphate-binding positions include Gly179, 194–195 (EK), and Ser212. Arg386 is a binding site for AMP.

The protein belongs to the bacterial/plant glucose-1-phosphate adenylyltransferase family. Homotetramer.

The catalysed reaction is alpha-D-glucose 1-phosphate + ATP + H(+) = ADP-alpha-D-glucose + diphosphate. It participates in glycan biosynthesis; glycogen biosynthesis. Allosterically activated by fructose-1,6-bisphosphate (F16BP) and inhibited by AMP. Involved in the biosynthesis of ADP-glucose, a building block required for the elongation reactions to produce glycogen. Catalyzes the reaction between ATP and alpha-D-glucose 1-phosphate (G1P) to produce pyrophosphate and ADP-Glc. The polypeptide is Glucose-1-phosphate adenylyltransferase (Cronobacter sakazakii (strain ATCC BAA-894) (Enterobacter sakazakii)).